A 361-amino-acid polypeptide reads, in one-letter code: Probable U3 small nucleolar RNA-associated protein 11 (361 aa).

Disordered stretches follow at residues 1–52 (MTKG…KKRK), 200–235 (LMSGGHQIKSAAQKRKERREVQEKMRRSGADATPET), 262–295 (KRESEATASSSKGAPGDDGEQEEAAAQDEVTRLL), and 311–361 (RHVR…RRAR). The segment covering 17 to 33 (HLKRKTHLERSQPKSRQ) has biased composition (basic residues). Composition is skewed to basic and acidic residues over residues 37–46 (QLEKHKDHVL) and 217–228 (RREVQEKMRRSG). Over residues 278–287 (DDGEQEEAAA) the composition is skewed to acidic residues. Basic and acidic residues predominate over residues 342–352 (RQMEQRRESRF).

Belongs to the UTP11 family. Component of the ribosomal small subunit (SSU) processome.

It is found in the nucleus. It localises to the nucleolus. In terms of biological role, involved in nucleolar processing of pre-18S ribosomal RNA. This is Probable U3 small nucleolar RNA-associated protein 11 from Leishmania major.